Here is a 339-residue protein sequence, read N- to C-terminus: tRNA-dihydrouridine(20/20a) synthase (339 aa).

FMN-binding positions include 26–28 (PML) and Gln-78. Cys-108 serves as the catalytic Proton donor. FMN-binding positions include Lys-147, His-180, 220-222 (NGG), and 242-243 (GR).

The protein belongs to the Dus family. DusA subfamily. FMN is required as a cofactor.

The catalysed reaction is 5,6-dihydrouridine(20) in tRNA + NADP(+) = uridine(20) in tRNA + NADPH + H(+). It carries out the reaction 5,6-dihydrouridine(20) in tRNA + NAD(+) = uridine(20) in tRNA + NADH + H(+). The enzyme catalyses 5,6-dihydrouridine(20a) in tRNA + NADP(+) = uridine(20a) in tRNA + NADPH + H(+). It catalyses the reaction 5,6-dihydrouridine(20a) in tRNA + NAD(+) = uridine(20a) in tRNA + NADH + H(+). Catalyzes the synthesis of 5,6-dihydrouridine (D), a modified base found in the D-loop of most tRNAs, via the reduction of the C5-C6 double bond in target uridines. Specifically modifies U20 and U20a in tRNAs. This chain is tRNA-dihydrouridine(20/20a) synthase, found in Shigella flexneri.